The chain runs to 216 residues: Imidazole glycerol phosphate synthase subunit HisH (216 aa).

Residues 2–216 (SIAIIDYGSG…LISNFLRWKP (215 aa)) form the Glutamine amidotransferase type-1 domain. Cys-88 serves as the catalytic Nucleophile. Catalysis depends on residues His-196 and Glu-198.

In terms of assembly, heterodimer of HisH and HisF.

The protein resides in the cytoplasm. The catalysed reaction is 5-[(5-phospho-1-deoxy-D-ribulos-1-ylimino)methylamino]-1-(5-phospho-beta-D-ribosyl)imidazole-4-carboxamide + L-glutamine = D-erythro-1-(imidazol-4-yl)glycerol 3-phosphate + 5-amino-1-(5-phospho-beta-D-ribosyl)imidazole-4-carboxamide + L-glutamate + H(+). It catalyses the reaction L-glutamine + H2O = L-glutamate + NH4(+). It participates in amino-acid biosynthesis; L-histidine biosynthesis; L-histidine from 5-phospho-alpha-D-ribose 1-diphosphate: step 5/9. IGPS catalyzes the conversion of PRFAR and glutamine to IGP, AICAR and glutamate. The HisH subunit catalyzes the hydrolysis of glutamine to glutamate and ammonia as part of the synthesis of IGP and AICAR. The resulting ammonia molecule is channeled to the active site of HisF. This Bradyrhizobium diazoefficiens (strain JCM 10833 / BCRC 13528 / IAM 13628 / NBRC 14792 / USDA 110) protein is Imidazole glycerol phosphate synthase subunit HisH.